We begin with the raw amino-acid sequence, 313 residues long: MNLHQFRFVREAVRQNFNLTEAAKALYTSQPGVSKAIIELEDELGVEIFTRHGKRVRSLTEPGRIILASVERILQEVESLKRVGKDYAAQDQGNLTIAATHTQARYSLPAAIAEFKKRFPKVHLSILQGSPTQVAEMVIHDQADLAIATEAISDYKELVSLPCFQWHHAAVVPADHPLLERKPVTLDDLAQYPLITYDDAFAGRKKINHAFALRGLSPDIVLEAIDADVIKTYVELGLGVGIMADIAFNPERDRGLRLIPVGHLFGSNVTRVALKQGAYLRSYVYTLVELLSPTLNRKLIEQALKGEAESYEL.

In terms of domain architecture, HTH lysR-type spans 1-59 (MNLHQFRFVREAVRQNFNLTEAAKALYTSQPGVSKAIIELEDELGVEIFTRHGKRVRSL). A DNA-binding region (H-T-H motif) is located at residues 19–38 (LTEAAKALYTSQPGVSKAII).

Belongs to the LysR transcriptional regulatory family.

In terms of biological role, transcriptional regulator preferentially involved in the control of sulfate transport and reduction. Binds to DNA at target promoter regions. The protein is HTH-type transcriptional regulator CysB of Burkholderia cenocepacia (strain ATCC BAA-245 / DSM 16553 / LMG 16656 / NCTC 13227 / J2315 / CF5610) (Burkholderia cepacia (strain J2315)).